Consider the following 314-residue polypeptide: Vomeronasal type-1 receptor 95 (314 aa).

Topologically, residues 1–18 (MNKDNTLYCSAYRIAFFS) are extracellular. A helical transmembrane segment spans residues 19-39 (EIGIGISANSCLLLFHTFMFI). At 40–48 (RGHRPRLTD) the chain is on the cytoplasmic side. A helical membrane pass occupies residues 49 to 69 (LPIGLVALIHLVMLLLAAYIT). At 70-88 (EDFFMSSGGWDDITCKLFI) the chain is on the extracellular side. C84 and C171 are joined by a disulfide. The chain crosses the membrane as a helical span at residues 89-113 (FLHRFFRSLSVCDTCMLSVFQAIIL). Over 114–133 (CPQSSHLAKFKLNSPHHLSC) the chain is Cytoplasmic. Residues 134–154 (FFIFMSIFYTSISSHILIAAI) traverse the membrane as a helical segment. Topologically, residues 155-186 (ATQNLTSVNLIYITKSCSFLPMSSSMQRTFST) are extracellular. N158 carries N-linked (GlcNAc...) asparagine glycosylation. Residues 187-207 (LLAFRNVFLIGLMGLSTCYMA) form a helical membrane-spanning segment. Residues 208-235 (TLLCRHKTRSQQLQNSKLSPKATPEQRA) are Cytoplasmic-facing. A helical transmembrane segment spans residues 236–256 (IWTILMLMSFFLIISTFDSIM). At 257-268 (TYSRTIFQGNQS) the chain is on the extracellular side. A glycan (N-linked (GlcNAc...) asparagine) is linked at N266. The helical transmembrane segment at 269–289 (LYCVQIPVAHGYAAFSPLLVL) threads the bilayer. At 290–314 (NNEKRLTSLMISMYDRIVRLESLCS) the chain is on the cytoplasmic side.

The protein belongs to the G-protein coupled receptor 1 family.

The protein resides in the cell membrane. Functionally, putative pheromone receptor implicated in the regulation of social as well as reproductive behavior. In Rattus norvegicus (Rat), this protein is Vomeronasal type-1 receptor 95 (Vom1r95).